The sequence spans 192 residues: dTTP/UTP pyrophosphatase (192 aa).

Aspartate 72 acts as the Proton acceptor in catalysis.

The protein belongs to the Maf family. YhdE subfamily. A divalent metal cation serves as cofactor.

The protein localises to the cytoplasm. It carries out the reaction dTTP + H2O = dTMP + diphosphate + H(+). It catalyses the reaction UTP + H2O = UMP + diphosphate + H(+). In terms of biological role, nucleoside triphosphate pyrophosphatase that hydrolyzes dTTP and UTP. May have a dual role in cell division arrest and in preventing the incorporation of modified nucleotides into cellular nucleic acids. The sequence is that of dTTP/UTP pyrophosphatase from Geobacter metallireducens (strain ATCC 53774 / DSM 7210 / GS-15).